Reading from the N-terminus, the 188-residue chain is Surfactant protein C (188 aa).

Positions 1–23 are excised as a propeptide; that stretch reads MDMGSKEALMESPPDYSAAPRGR. S-palmitoyl cysteine attachment occurs at residues C28 and C29. The propeptide occupies 59 to 188; it reads HMSQKHTEMV…LCGEVPLIYI (130 aa). In terms of domain architecture, BRICHOS spans 94 to 188; it reads FPIGSTGIVT…LCGEVPLIYI (95 aa). A disulfide bridge connects residues C121 and C180. A disordered region spans residues 144-164; that stretch reads NPAEPPTQRGQDKGPAAGPAS.

It is found in the secreted. It localises to the extracellular space. The protein resides in the surface film. Functionally, pulmonary surfactant associated proteins promote alveolar stability by lowering the surface tension at the air-liquid interface in the peripheral air spaces. This is Surfactant protein C (SFTPC) from Oryctolagus cuniculus (Rabbit).